Consider the following 207-residue polypeptide: MARYIGPKAKLSRREGTDLFLKSARRSLDSKCKLDSKPGQHGRTSGARTSDYGNQLREKQKVKRMYGILERQFRRYFAEADRRKGNTGETLLKLLEARLDNVVYRMGFGSTRAEGRQLVSHKAFTVNGIVVNIASYQVKPGDVIAVREKSKKQVRIVEALSLAEQSGMPSWVSVDAKKMEGTYKAAPDRSEIANDVNESLIVELYSR.

The tract at residues 31–56 (KCKLDSKPGQHGRTSGARTSDYGNQL) is disordered. A compositionally biased stretch (polar residues) spans 42-53 (GRTSGARTSDYG). The S4 RNA-binding domain occupies 97–157 (ARLDNVVYRM…EKSKKQVRIV (61 aa)).

This sequence belongs to the universal ribosomal protein uS4 family. In terms of assembly, part of the 30S ribosomal subunit. Contacts protein S5. The interaction surface between S4 and S5 is involved in control of translational fidelity.

One of the primary rRNA binding proteins, it binds directly to 16S rRNA where it nucleates assembly of the body of the 30S subunit. Functionally, with S5 and S12 plays an important role in translational accuracy. In Janthinobacterium sp. (strain Marseille) (Minibacterium massiliensis), this protein is Small ribosomal subunit protein uS4.